Reading from the N-terminus, the 79-residue chain is MSDIEARVKKIIAEQLGVAEAEVTSEKAFVADLGADSLDTVELVMALEDEFGIEIPDEEAEKITTVQLAIDYAKNNVKA.

The Carrier domain maps to 2-77 (SDIEARVKKI…LAIDYAKNNV (76 aa)). Residue Ser-37 is modified to O-(pantetheine 4'-phosphoryl)serine.

It belongs to the acyl carrier protein (ACP) family. Post-translationally, 4'-phosphopantetheine is transferred from CoA to a specific serine of apo-ACP by AcpS. This modification is essential for activity because fatty acids are bound in thioester linkage to the sulfhydryl of the prosthetic group.

It localises to the cytoplasm. The protein operates within lipid metabolism; fatty acid biosynthesis. In terms of biological role, carrier of the growing fatty acid chain in fatty acid biosynthesis. The protein is Acyl carrier protein of Leptothrix cholodnii (strain ATCC 51168 / LMG 8142 / SP-6) (Leptothrix discophora (strain SP-6)).